A 96-amino-acid chain; its full sequence is UPF0235 protein Acid345_4205 (96 aa).

Belongs to the UPF0235 family.

This Koribacter versatilis (strain Ellin345) protein is UPF0235 protein Acid345_4205.